The sequence spans 445 residues: Probable carboxypeptidase UREG_07869 (445 aa).

Positions 1–17 (MKSLILTTLALLPLVSC) are cleaved as a signal peptide. Residue Asp-165 coordinates Zn(2+). Catalysis depends on Glu-197, which acts as the Proton acceptor. Residue Glu-198 participates in Zn(2+) binding.

Belongs to the peptidase M20A family. Requires Zn(2+) as cofactor.

The protein resides in the secreted. This is Probable carboxypeptidase UREG_07869 from Uncinocarpus reesii (strain UAMH 1704).